Here is a 399-residue protein sequence, read N- to C-terminus: Ribonuclease D (399 aa).

The 167-residue stretch at 31-197 (RVVTDNTALL…PLYHILEKEL (167 aa)) folds into the 3'-5' exonuclease domain. In terms of domain architecture, HRDC spans 239-318 (NPLELSRLRV…SQARRISSND (80 aa)).

The protein belongs to the RNase D family. The cofactor is a divalent metal cation.

The protein resides in the cytoplasm. The enzyme catalyses Exonucleolytic cleavage that removes extra residues from the 3'-terminus of tRNA to produce 5'-mononucleotides.. Functionally, exonuclease involved in the 3' processing of various precursor tRNAs. Initiates hydrolysis at the 3'-terminus of an RNA molecule and releases 5'-mononucleotides. In Haemophilus influenzae (strain ATCC 51907 / DSM 11121 / KW20 / Rd), this protein is Ribonuclease D.